Consider the following 297-residue polypeptide: Calponin-1 (297 aa).

Positions 28 to 131 constitute a Calponin-homology (CH) domain; sequence HQREQELREW…STLLALASMA (104 aa). Calponin-like repeat units follow at residues 164-189, 204-229, and 243-268; these read IGLQ…RHLY, ISLQ…RQIF, and VSLQ…RQVY. Phosphothreonine; by ROCK2 is present on T170. Phosphoserine; by ROCK2 is present on S175. T180 and T184 each carry phosphothreonine; by ROCK2. Residue T259 is modified to Phosphothreonine; by ROCK2.

Belongs to the calponin family.

In terms of biological role, thin filament-associated protein that is implicated in the regulation and modulation of smooth muscle contraction. It is capable of binding to actin, calmodulin and tropomyosin. The interaction of calponin with actin inhibits the actomyosin Mg-ATPase activity. This Bos taurus (Bovine) protein is Calponin-1 (CNN1).